Here is a 284-residue protein sequence, read N- to C-terminus: Tropomyosin Tod p 1.0102 (284 aa).

Residues 15–273 adopt a coiled-coil conformation; it reads KEVATDKAEQ…KERYKSISDE (259 aa). The segment at 103-136 is disordered; that stretch reads EERLTSAQSKLEDASKAADESERGRKVLENRSQG.

This sequence belongs to the tropomyosin family. As to quaternary structure, homodimer. The N-terminus is blocked. In terms of tissue distribution, expressed in mantle muscle (at protein level).

Its function is as follows. Tropomyosin, in association with the troponin complex, plays a central role in the calcium dependent regulation of muscle contraction. This is Tropomyosin Tod p 1.0102 from Todarodes pacificus (Japanese flying squid).